Here is a 324-residue protein sequence, read N- to C-terminus: tRNA U34 carboxymethyltransferase (324 aa).

Residues lysine 92, tryptophan 106, lysine 111, glycine 131, 153-155, methionine 197, tyrosine 201, and arginine 316 each bind carboxy-S-adenosyl-L-methionine; that span reads DPS.

This sequence belongs to the class I-like SAM-binding methyltransferase superfamily. CmoB family. As to quaternary structure, homotetramer.

It catalyses the reaction carboxy-S-adenosyl-L-methionine + 5-hydroxyuridine(34) in tRNA = 5-carboxymethoxyuridine(34) in tRNA + S-adenosyl-L-homocysteine + H(+). Functionally, catalyzes carboxymethyl transfer from carboxy-S-adenosyl-L-methionine (Cx-SAM) to 5-hydroxyuridine (ho5U) to form 5-carboxymethoxyuridine (cmo5U) at position 34 in tRNAs. In Hahella chejuensis (strain KCTC 2396), this protein is tRNA U34 carboxymethyltransferase.